Reading from the N-terminus, the 181-residue chain is MASVQGLIKIVAITGGVWLSGKITAHSLVSVPALLQTRSADGLSPCTILRVWRRIYEQGHRHSPQIAACTSTAFAYLAWCASDRTPRLLYGTAACSVMGIVPYTLLFMGPTNSRLLERSAAEEEKVPGATRGEDMVNVPSEMTTEELLSHWRFLAGIRGLLPLAGGILGLFAALYSNEGAR.

The next 4 membrane-spanning stretches (helical) occupy residues 1 to 21 (MASV…WLSG), 65 to 81 (QIAA…AWCA), 88 to 108 (LLYG…LLFM), and 153 to 173 (FLAG…LFAA).

It belongs to the anthrone oxygenase family. Endocrocin is specifically produced in conidia.

It localises to the membrane. Functionally, anthrone oxygenase; part of the gene cluster that mediates the biosynthesis of endocrocin, a simple anthraquinone interesting for many biotechnological applications. The pathway begins with the synthesis of atrochrysone thioester by the polyketide synthase (PKS) encA. The atrochrysone carboxyl ACP thioesterase encB then breaks the thioester bond and releases the atrochrysone carboxylic acid from encA. The atrochrysone carboxylic acid is then converted to endocrocin anthrone which is further oxidized into endocrocin by the anthrone oxygenase encC. The exact function of encD has not been identified yet, but it negatively regulates endocrocin production, likely through the modification of endocrocin itself. The polypeptide is Anthrone oxygenase encC (Aspergillus fumigatus (strain ATCC MYA-4609 / CBS 101355 / FGSC A1100 / Af293) (Neosartorya fumigata)).